We begin with the raw amino-acid sequence, 215 residues long: MALQQYNKFPFFFSGILGPTRLNGLQMPPIQTMVRWGHQYAPRSIRNQKAQKGRVPIPIGGSLRGTQLEWGEYGMRLKDRSIRFHAKQLETAEQILKRILKPIKAARVYTRFCCNVPVCVKGNETRMGKGKGAFEYWAARIPIGRVLFEIGGDGMRKELAEHALKQAAFHLPGKYEIIVKQTPKRLGTTLIHETPITTETSKMNYQEITSTTTAV.

The transit peptide at 1–36 (MALQQYNKFPFFFSGILGPTRLNGLQMPPIQTMVRW) directs the protein to the mitochondrion.

The protein belongs to the universal ribosomal protein uL16 family. As to quaternary structure, component of the mitochondrial large ribosomal subunit (mt-LSU). Mature yeast 74S mitochondrial ribosomes consist of a small (37S) and a large (54S) subunit. The 37S small subunit contains a 15S ribosomal RNA (15S mt-rRNA) and at least 32 different proteins. The 54S large subunit contains a 21S rRNA (21S mt-rRNA) and at least 45 different proteins.

The protein localises to the mitochondrion. Its function is as follows. Component of the mitochondrial ribosome (mitoribosome), a dedicated translation machinery responsible for the synthesis of mitochondrial genome-encoded proteins, including at least some of the essential transmembrane subunits of the mitochondrial respiratory chain. The mitoribosomes are attached to the mitochondrial inner membrane and translation products are cotranslationally integrated into the membrane. In Schizosaccharomyces pombe (strain 972 / ATCC 24843) (Fission yeast), this protein is Large ribosomal subunit protein uL16m (mrpl16).